We begin with the raw amino-acid sequence, 168 residues long: Small ribosomal subunit protein uS5 (168 aa).

Residues 13–76 (LAEKLIAVNR…EKARRNMINV (64 aa)) form the S5 DRBM domain.

This sequence belongs to the universal ribosomal protein uS5 family. In terms of assembly, part of the 30S ribosomal subunit. Contacts proteins S4 and S8.

In terms of biological role, with S4 and S12 plays an important role in translational accuracy. Functionally, located at the back of the 30S subunit body where it stabilizes the conformation of the head with respect to the body. This chain is Small ribosomal subunit protein uS5, found in Pseudoalteromonas translucida (strain TAC 125).